We begin with the raw amino-acid sequence, 144 residues long: uncharacterized protein (144 aa).

The stretch at 48-119 forms a coiled coil; sequence ELNKLKAKAD…KETEEPKMEL (72 aa).

This is an uncharacterized protein from Archaeoglobus fulgidus (strain ATCC 49558 / DSM 4304 / JCM 9628 / NBRC 100126 / VC-16).